A 581-amino-acid polypeptide reads, in one-letter code: Probable bifunctional SAT/APS kinase 2 (581 aa).

Residues 1–200 (MSGFVVWFTG…AAGGARGLIA (200 aa)) are adenylsulfate kinase. Residue 10–17 (GLSGAGKS) coordinates ATP. Residue serine 84 is the Phosphoserine intermediate of the active site. Residues 201 to 581 (PHGGELVNRW…ILIESMRSSS (381 aa)) form a sulfate adenylyltransferase region.

It in the N-terminal section; belongs to the APS kinase family. The protein in the C-terminal section; belongs to the sulfate adenylyltransferase family.

It catalyses the reaction sulfate + ATP + H(+) = adenosine 5'-phosphosulfate + diphosphate. The catalysed reaction is adenosine 5'-phosphosulfate + ATP = 3'-phosphoadenylyl sulfate + ADP + H(+). Its pathway is sulfur metabolism; hydrogen sulfide biosynthesis; sulfite from sulfate: step 1/3. It functions in the pathway sulfur metabolism; hydrogen sulfide biosynthesis; sulfite from sulfate: step 2/3. The sequence is that of Probable bifunctional SAT/APS kinase 2 (sat2/cysC2) from Sorangium cellulosum (strain So ce56) (Polyangium cellulosum (strain So ce56)).